The chain runs to 262 residues: Ribosomal RNA small subunit methyltransferase A (262 aa).

Residues I18, G43, E65, D91, and N110 each contribute to the S-adenosyl-L-methionine site.

It belongs to the class I-like SAM-binding methyltransferase superfamily. rRNA adenine N(6)-methyltransferase family. RsmA subfamily.

It is found in the cytoplasm. The catalysed reaction is adenosine(1518)/adenosine(1519) in 16S rRNA + 4 S-adenosyl-L-methionine = N(6)-dimethyladenosine(1518)/N(6)-dimethyladenosine(1519) in 16S rRNA + 4 S-adenosyl-L-homocysteine + 4 H(+). In terms of biological role, specifically dimethylates two adjacent adenosines (A1518 and A1519) in the loop of a conserved hairpin near the 3'-end of 16S rRNA in the 30S particle. May play a critical role in biogenesis of 30S subunits. This is Ribosomal RNA small subunit methyltransferase A from Ehrlichia canis (strain Jake).